The sequence spans 418 residues: MLDPHILRSRPKDVSDMLQARNVDFDLDALLDADERRRYFMQLADDMRQERNFAGRQVAQFKRDGVDTTAAIKEMKDLSEKLYQAEGEQQSAESEYLELAWTIPNMIDKSVPRGPDETANVVLRKWVGTPTPSVPKGHEELAVGRGLLDMKRAAKVSGARFYYLKGSLVRLNQALISHSLDFLGSRGYTLVQPPYLIRRNAMEGAIIAEDFEDVIYKIEDDDLYLIGTSEHAMAAMHSDEIIEGGLPLRYAGVSPCFRKEAGAHGKDQKGIFRVHQFDKIEQFVFSKPEDSWREHDRMLEITEEFYQGLGIPYRVVLLSSGDMGKVSAKTYDIECWMAAQDAYREVVSCSNCLDFQSRRLKVRFRDRTDEDTQYVHTLNSTLAATSRLLACIIENFQEADGTIRVPQPLQKYVGKEAI.

228–230 (TSE) is an L-serine binding site. ATP contacts are provided by residues 258 to 260 (RKE) and valine 274. Glutamate 281 lines the L-serine pocket. 345-348 (EVVS) is a binding site for ATP. Threonine 381 serves as a coordination point for L-serine.

It belongs to the class-II aminoacyl-tRNA synthetase family. Type-1 seryl-tRNA synthetase subfamily. As to quaternary structure, homodimer. The tRNA molecule binds across the dimer.

The protein resides in the cytoplasm. The enzyme catalyses tRNA(Ser) + L-serine + ATP = L-seryl-tRNA(Ser) + AMP + diphosphate + H(+). It catalyses the reaction tRNA(Sec) + L-serine + ATP = L-seryl-tRNA(Sec) + AMP + diphosphate + H(+). Its pathway is aminoacyl-tRNA biosynthesis; selenocysteinyl-tRNA(Sec) biosynthesis; L-seryl-tRNA(Sec) from L-serine and tRNA(Sec): step 1/1. Its function is as follows. Catalyzes the attachment of serine to tRNA(Ser). Is also able to aminoacylate tRNA(Sec) with serine, to form the misacylated tRNA L-seryl-tRNA(Sec), which will be further converted into selenocysteinyl-tRNA(Sec). The sequence is that of Serine--tRNA ligase from Cenarchaeum symbiosum (strain A).